A 459-amino-acid chain; its full sequence is Putrescine aminotransferase (459 aa).

Pyridoxal 5'-phosphate-binding positions include 150–151 (GT) and Q274. The residue at position 300 (K300) is an N6-(pyridoxal phosphate)lysine. Residue T332 coordinates pyridoxal 5'-phosphate.

This sequence belongs to the class-III pyridoxal-phosphate-dependent aminotransferase family. Putrescine aminotransferase subfamily. Requires pyridoxal 5'-phosphate as cofactor.

The catalysed reaction is an alkane-alpha,omega-diamine + 2-oxoglutarate = an omega-aminoaldehyde + L-glutamate. The enzyme catalyses putrescine + 2-oxoglutarate = 1-pyrroline + L-glutamate + H2O. It catalyses the reaction cadaverine + 2-oxoglutarate = 5-aminopentanal + L-glutamate. Its pathway is amine and polyamine degradation; putrescine degradation; 4-aminobutanal from putrescine (transaminase route): step 1/1. In terms of biological role, catalyzes the aminotransferase reaction from putrescine to 2-oxoglutarate, leading to glutamate and 4-aminobutanal, which spontaneously cyclizes to form 1-pyrroline. This is the first step in one of two pathways for putrescine degradation, where putrescine is converted into 4-aminobutanoate (gamma-aminobutyrate or GABA) via 4-aminobutanal. Also functions as a cadaverine transaminase in a a L-lysine degradation pathway to succinate that proceeds via cadaverine, glutarate and L-2-hydroxyglutarate. The protein is Putrescine aminotransferase of Escherichia fergusonii (strain ATCC 35469 / DSM 13698 / CCUG 18766 / IAM 14443 / JCM 21226 / LMG 7866 / NBRC 102419 / NCTC 12128 / CDC 0568-73).